Reading from the N-terminus, the 332-residue chain is Spherulin-4 (332 aa).

Residues 1 to 22 form the signal peptide; the sequence is MNIKIVVLVIFAILLGSALAWH. Residues 26–60 are disordered; sequence HHNPTKAPTEAPHRGGGGGGGHNTPAPTQPPRQNT.

The polypeptide is Spherulin-4 (Physarum polycephalum (Slime mold)).